Consider the following 323-residue polypeptide: Prenyl transferase (323 aa).

3 residues coordinate isopentenyl diphosphate: Lys-46, Arg-49, and His-81. Asp-88 and Asp-92 together coordinate Mg(2+). Residue Arg-97 participates in an all-trans-polyprenyl diphosphate binding. Arg-98 is a binding site for isopentenyl diphosphate. 3 residues coordinate an all-trans-polyprenyl diphosphate: Lys-174, Thr-175, and Gln-212.

It belongs to the FPP/GGPP synthase family. Requires Mg(2+) as cofactor.

It localises to the plastid. The protein localises to the cyanelle. Its function is as follows. Possible role in synthesis of the nonaprenyl side chain of plastoquinone or in synthesis of other prenyl chains such as undekaprenyl pyrophosphate. This is Prenyl transferase (preA) from Cyanophora paradoxa.